The chain runs to 450 residues: Probable malate:quinone oxidoreductase (450 aa).

This sequence belongs to the MQO family. It depends on FAD as a cofactor.

It carries out the reaction (S)-malate + a quinone = a quinol + oxaloacetate. Its pathway is carbohydrate metabolism; tricarboxylic acid cycle; oxaloacetate from (S)-malate (quinone route): step 1/1. The sequence is that of Probable malate:quinone oxidoreductase from Helicobacter pylori (strain P12).